An 88-amino-acid chain; its full sequence is Exodeoxyribonuclease 7 small subunit (88 aa).

The segment at Asp-69–Gln-88 is disordered.

Belongs to the XseB family. In terms of assembly, heterooligomer composed of large and small subunits.

The protein localises to the cytoplasm. The enzyme catalyses Exonucleolytic cleavage in either 5'- to 3'- or 3'- to 5'-direction to yield nucleoside 5'-phosphates.. Bidirectionally degrades single-stranded DNA into large acid-insoluble oligonucleotides, which are then degraded further into small acid-soluble oligonucleotides. In Xylella fastidiosa (strain M12), this protein is Exodeoxyribonuclease 7 small subunit.